Consider the following 1132-residue polypeptide: Mis18-binding protein 1 (1132 aa).

Lys7 participates in a covalent cross-link: Glycyl lysine isopeptide (Lys-Gly) (interchain with G-Cter in SUMO2). Ser9 is modified (phosphoserine). Lys65 participates in a covalent cross-link: Glycyl lysine isopeptide (Lys-Gly) (interchain with G-Cter in SUMO2). 5 positions are modified to phosphoserine: Ser110, Ser131, Ser135, Ser172, and Ser192. The interval 123 to 154 (LRDKQEQPSRNSSLLEPQKSGNNETFTPNRVE) is disordered. Polar residues predominate over residues 130-150 (PSRNSSLLEPQKSGNNETFTP). Residues Lys211 and Lys262 each participate in a glycyl lysine isopeptide (Lys-Gly) (interchain with G-Cter in SUMO2) cross-link. A Phosphoserine modification is found at Ser299. The interval 306 to 332 (SERTTEGTSQQKVKEGNGKTVPGETGL) is disordered. The residue at position 365 (Ser365) is a Phosphoserine. In terms of domain architecture, SANTA spans 383–469 (VQLQEWMIKS…MFGFPENWKE (87 aa)). The disordered stretch occupies residues 482 to 518 (EKNREKTKQKQKTGRSVRDIRKSMKNDARENQTDTAQ). Residues 497–513 (SVRDIRKSMKNDARENQ) are compositionally biased toward basic and acidic residues. Residues Lys534, Lys612, Lys639, and Lys647 each participate in a glycyl lysine isopeptide (Lys-Gly) (interchain with G-Cter in SUMO2) cross-link. Thr653 carries the phosphothreonine modification. Residues Lys727 and Lys742 each participate in a glycyl lysine isopeptide (Lys-Gly) (interchain with G-Cter in SUMO2) cross-link. Residues 765–798 (HQSSPDLSSEESETEKEIKRKAEVKKTKAGNTKE) are disordered. 2 positions are modified to phosphoserine: Ser772 and Ser773. The span at 779 to 790 (EKEIKRKAEVKK) shows a compositional bias: basic and acidic residues. The residue at position 821 (Thr821) is a Phosphothreonine. Ser824 carries the post-translational modification Phosphoserine. Lys840 participates in a covalent cross-link: Glycyl lysine isopeptide (Lys-Gly) (interchain with G-Cter in SUMO2). The residue at position 860 (Ser860) is a Phosphoserine. Residues 875–930 (IQDKEWNEKELQKLHCAFASLPKHKPGFWSEVAAAVGSRSPEECQRKYMENPRGKG) enclose the SANT domain. A Glycyl lysine isopeptide (Lys-Gly) (interchain with G-Cter in SUMO2) cross-link involves residue Lys899. The interval 923–957 (MENPRGKGSQKHVTKKKPANSKGQNGKRGDADQKQ) is disordered. Residues 930–941 (GSQKHVTKKKPA) show a composition bias toward basic residues. Glycyl lysine isopeptide (Lys-Gly) (interchain with G-Cter in SUMO2) cross-links involve residues Lys956, Lys964, and Lys983. Ser1008 is modified (phosphoserine). A Glycyl lysine isopeptide (Lys-Gly) (interchain with G-Cter in SUMO2) cross-link involves residue Lys1079. Ser1086 bears the Phosphoserine mark. Residues Thr1087 and Thr1089 each carry the phosphothreonine modification. A phosphoserine mark is found at Ser1104 and Ser1116.

In terms of assembly, interacts with SP1. Interacts with MIS18A. Identified in a complex containing MIS18A, OIP5/MIS18B, MIS18BP1, RBBP7 and RBBP4. Interacts with KAT7/HBO1. Interacts (via N-terminus) with FLNA (via N-terminus).

Its subcellular location is the nucleus. It is found in the chromosome. It localises to the centromere. Functionally, required for recruitment of CENPA to centromeres and normal chromosome segregation during mitosis. The protein is Mis18-binding protein 1 (MIS18BP1) of Homo sapiens (Human).